The following is a 521-amino-acid chain: GMP synthase [glutamine-hydrolyzing] (521 aa).

The 196-residue stretch at 8–203 folds into the Glutamine amidotransferase type-1 domain; sequence KILILDFGAQ…VVDVCGCQTL (196 aa). The active-site Nucleophile is the C85. Active-site residues include H177 and E179. One can recognise a GMPS ATP-PPase domain in the interval 204-396; sequence WTAANIIEDQ…LGLPRTMVYR (193 aa). 231–237 contributes to the ATP binding site; the sequence is SGGVDSS.

In terms of assembly, homodimer.

It carries out the reaction XMP + L-glutamine + ATP + H2O = GMP + L-glutamate + AMP + diphosphate + 2 H(+). It participates in purine metabolism; GMP biosynthesis; GMP from XMP (L-Gln route): step 1/1. In terms of biological role, catalyzes the synthesis of GMP from XMP. This Xanthomonas axonopodis pv. citri (strain 306) protein is GMP synthase [glutamine-hydrolyzing].